Consider the following 453-residue polypeptide: Charged multivesicular body protein 7 (453 aa).

Positions 1 to 22 (MWSPEREAEAPAGGDPAGLLPP) are disordered. The span at 10-22 (APAGGDPAGLLPP) shows a compositional bias: low complexity. The residue at position 232 (Ser232) is a Phosphoserine. Residues 243 to 312 (QLMQSEQLLS…DTVQGILDRI (70 aa)) are a coiled coil. Residues 392 to 403 (TKEPLDLPDNPR) are compositionally biased toward basic and acidic residues. Disordered regions lie at residues 392–417 (TKEP…PRIS) and 431–453 (SEGG…LKPL). A Phosphothreonine modification is found at Thr408. 4 positions are modified to phosphoserine: Ser410, Ser417, Ser431, and Ser441.

This sequence belongs to the SNF7 family. In terms of assembly, interacts with CHMP4B, but not with VPS25. Interacts with LEMD2 (via C-terminus).

Its subcellular location is the cytoplasm. The protein localises to the nucleus envelope. Functionally, ESCRT-III-like protein required to recruit the ESCRT-III complex to the nuclear envelope (NE) during late anaphase. Together with SPAST, the ESCRT-III complex promotes NE sealing and mitotic spindle disassembly during late anaphase. Recruited to the reforming NE during anaphase by LEMD2. Plays a role in the endosomal sorting pathway. The chain is Charged multivesicular body protein 7 (CHMP7) from Homo sapiens (Human).